The primary structure comprises 206 residues: Ribosomal RNA small subunit methyltransferase G (206 aa).

Residues glycine 73, leucine 78, 124-125, and arginine 139 each bind S-adenosyl-L-methionine; that span reads VE.

The protein belongs to the methyltransferase superfamily. RNA methyltransferase RsmG family.

Its subcellular location is the cytoplasm. The catalysed reaction is guanosine(527) in 16S rRNA + S-adenosyl-L-methionine = N(7)-methylguanosine(527) in 16S rRNA + S-adenosyl-L-homocysteine. In terms of biological role, specifically methylates the N7 position of guanine in position 527 of 16S rRNA. The protein is Ribosomal RNA small subunit methyltransferase G of Pectobacterium carotovorum subsp. carotovorum (strain PC1).